The sequence spans 720 residues: Hexanoyl-CoA synthase (720 aa).

Residues 242 to 262 form a helical membrane-spanning segment; that stretch reads VDAVVIYLAIVLAGYVVVSIA. 290–293 contacts CoA; sequence RGKK. ATP is bound by residues 477–479, 499–504, Glu-585, and Arg-607; these read GEA and EMCGGT. Gly-615 is a binding site for CoA. Lys-618 lines the ATP pocket. Gln-681 is a CoA binding site.

This sequence belongs to the ATP-dependent AMP-binding enzyme family. Mg(2+) is required as a cofactor. Accumulates in glandular trichomes, especially in female flowers. Present at low levels in roots, stems and leaves.

It is found in the cytoplasm. The protein resides in the cytosol. Its subcellular location is the membrane. It catalyses the reaction hexanoate + ATP + CoA = hexanoyl-CoA + AMP + diphosphate. It functions in the pathway secondary metabolite biosynthesis; terpenoid biosynthesis. Inhibitied by high CoA concentrations. In terms of biological role, involved in the biosynthesis of cannabinoids-related terpenophenolic natural products, which have pharmacological activity. Acyl-activating enzyme that catalyzes the conversion of hexanoic acid to hexanoyl-CoA, precursor of the cannabinoid pathway. Can also activate other fatty acids including heptanoate, octanoate and nonanoate. The polypeptide is Hexanoyl-CoA synthase (Cannabis sativa (Hemp)).